The primary structure comprises 335 residues: Nucleoid-associated protein CKO_00588 (335 aa).

The protein belongs to the YejK family.

The protein resides in the cytoplasm. It is found in the nucleoid. This chain is Nucleoid-associated protein CKO_00588, found in Citrobacter koseri (strain ATCC BAA-895 / CDC 4225-83 / SGSC4696).